The following is an 88-amino-acid chain: MAHKKGTGSTRNGRDSNSKRLGVKAYGGESVTAGSILIRQRGTSVMPGVNVGRGKDDTLFALTDGIVKFESIRRGLRNRKRITVAAAE.

The disordered stretch occupies residues 1–24; sequence MAHKKGTGSTRNGRDSNSKRLGVK.

This sequence belongs to the bacterial ribosomal protein bL27 family.

The sequence is that of Large ribosomal subunit protein bL27 from Synechococcus sp. (strain CC9311).